The following is a 565-amino-acid chain: Deformed epidermal autoregulatory factor 1 homolog (565 aa).

Disordered stretches follow at residues Gly-34–Arg-62 and Gly-162–Thr-190. Pro residues predominate over residues Pro-169–Leu-181. Thr-171 carries the post-translational modification Phosphothreonine. Position 176 is a phosphoserine (Ser-176). Thr-179 bears the Phosphothreonine mark. One can recognise an SAND domain in the interval Asn-193–Asn-273. The short motif at Lys-301 to Lys-316 is the Nuclear localization signal element. The segment at Ile-403–Lys-478 is interaction with LMO4. The residue at position 432 (Thr-432) is a Phosphothreonine. Residue Ser-448 is modified to Phosphoserine. Zn(2+) contacts are provided by Cys-504, Cys-507, Cys-515, Cys-518, Cys-524, Cys-528, His-536, and Cys-540. The segment at Cys-504 to Cys-540 adopts an MYND-type zinc-finger fold.

In terms of assembly, homodimer. Isoform 1 and isoform 4 may form a heterodimer. Interacts with LMO2 and CLIM2. Interacts with LMO4; LMO4 blocks export from nucleus. May interact with the corepressors NCOR1 and NCRO2. Identified in a complex with the XRCC5 and XRCC6 heterodimer. Interacts (via the SAND domain) with the DNA-PK complex subunit XRCC6; the interaction is direct and may be inhibited by DNA-binding. In terms of processing, may be phosphorylated by DNA-PK complex in a DNA independent manner (in vitro). Expressed in various tissues and cells such as in peripheral mononuclear cells and hormone-secreting pituitary cells. Expression in pancreatic lymph nodes of patients with type 1 diabetes is 20 times higher than in healthy controls. Highly expressed in fetal and adult brain.

The protein localises to the nucleus. Its subcellular location is the cytoplasm. It is found in the secreted. Its function is as follows. Transcription factor that binds to sequence with multiple copies of 5'-TTC[CG]G-3' present in its own promoter and that of the HNRPA2B1 gene. Down-regulates transcription of these genes. Binds to the retinoic acid response element (RARE) 5'-AGGGTTCACCGAAAGTTCA-3'. Activates the proenkephalin gene independently of promoter binding, probably through protein-protein interaction. When secreted, behaves as an inhibitor of cell proliferation, by arresting cells in the G0 or G1 phase. Required for neural tube closure and skeletal patterning. Regulates epithelial cell proliferation and side-branching in the mammary gland. Controls the expression of peripheral tissue antigens in pancreatic lymph nodes. Isoform 1 displays greater transcriptional activity than isoform 4. Isoform 4 may inhibit transcriptional activity of isoform 1 by interacting with isoform 1 and retaining it in the cytoplasm. Transcriptional activator of EIF4G3. The polypeptide is Deformed epidermal autoregulatory factor 1 homolog (DEAF1) (Homo sapiens (Human)).